The following is a 230-amino-acid chain: MKIGIVGAMAQEVEILKNLMADRTETRVASAVIFEGKINGKDIALLQSGIGKVAAAIGTTALLQLAKPDCVINTGSAGGVAKGLKVGDIVISDETRYHDADVTAFGYEKGQLPANPAAFLSDKKLADLAQEMAEKQGQSVKRGLICSGDSFINSEDKIAQIQADFPNVMGVEMEATAIAQVCYAFNVPFVVVRAISDGGDGKASMSFEEFLPLAAKQSSALVLGMIDRLS.

Glutamate 12 (proton acceptor) is an active-site residue. Substrate-binding positions include glycine 78, isoleucine 152, and 173-174 (ME). The active-site Proton donor is aspartate 197.

Belongs to the PNP/UDP phosphorylase family. MtnN subfamily.

The catalysed reaction is S-adenosyl-L-homocysteine + H2O = S-(5-deoxy-D-ribos-5-yl)-L-homocysteine + adenine. It catalyses the reaction S-methyl-5'-thioadenosine + H2O = 5-(methylsulfanyl)-D-ribose + adenine. The enzyme catalyses 5'-deoxyadenosine + H2O = 5-deoxy-D-ribose + adenine. The protein operates within amino-acid biosynthesis; L-methionine biosynthesis via salvage pathway; S-methyl-5-thio-alpha-D-ribose 1-phosphate from S-methyl-5'-thioadenosine (hydrolase route): step 1/2. Its function is as follows. Catalyzes the irreversible cleavage of the glycosidic bond in both 5'-methylthioadenosine (MTA) and S-adenosylhomocysteine (SAH/AdoHcy) to adenine and the corresponding thioribose, 5'-methylthioribose and S-ribosylhomocysteine, respectively. Also cleaves 5'-deoxyadenosine, a toxic by-product of radical S-adenosylmethionine (SAM) enzymes, into 5-deoxyribose and adenine. This is 5'-methylthioadenosine/S-adenosylhomocysteine nucleosidase from Haemophilus influenzae (strain 86-028NP).